The chain runs to 280 residues: Undecaprenyl-diphosphatase (280 aa).

Helical transmembrane passes span 1-21 (MEWI…FLPI), 40-60 (GAAF…VFFW), 89-109 (WLVV…QNAI), 116-136 (LWIV…ADAV), 146-166 (LTVK…IPGV), 191-211 (FLLA…KIVA), 227-247 (LATV…LKFI), and 260-280 (IALG…ATLS).

The protein belongs to the UppP family.

The protein resides in the cell membrane. It carries out the reaction di-trans,octa-cis-undecaprenyl diphosphate + H2O = di-trans,octa-cis-undecaprenyl phosphate + phosphate + H(+). Catalyzes the dephosphorylation of undecaprenyl diphosphate (UPP). Confers resistance to bacitracin. The protein is Undecaprenyl-diphosphatase of Renibacterium salmoninarum (strain ATCC 33209 / DSM 20767 / JCM 11484 / NBRC 15589 / NCIMB 2235).